The following is a 339-amino-acid chain: Small ribosomal subunit biogenesis GTPase RsgA (339 aa).

The region spanning 111-271 is the CP-type G domain; the sequence is MRGLLKPVAA…LIDSPGIREF (161 aa). Residues 159-162 and 213-221 contribute to the GTP site; these read NKAD and GQSGVGKSS. Residues Cys-295, Cys-300, His-302, and Cys-308 each contribute to the Zn(2+) site.

This sequence belongs to the TRAFAC class YlqF/YawG GTPase family. RsgA subfamily. In terms of assembly, monomer. Associates with 30S ribosomal subunit, binds 16S rRNA. Zn(2+) serves as cofactor.

It localises to the cytoplasm. One of several proteins that assist in the late maturation steps of the functional core of the 30S ribosomal subunit. Helps release RbfA from mature subunits. May play a role in the assembly of ribosomal proteins into the subunit. Circularly permuted GTPase that catalyzes slow GTP hydrolysis, GTPase activity is stimulated by the 30S ribosomal subunit. This Pseudomonas aeruginosa (strain UCBPP-PA14) protein is Small ribosomal subunit biogenesis GTPase RsgA.